The primary structure comprises 520 residues: Peptide chain release factor 3 (520 aa).

The region spanning 8–273 (ESRKTFAIIS…AYVDHAPMPN (266 aa)) is the tr-type G domain. GTP-binding positions include 17 to 24 (SHPDAGKT), 85 to 89 (DTPGH), and 139 to 142 (NKLD).

It belongs to the TRAFAC class translation factor GTPase superfamily. Classic translation factor GTPase family. PrfC subfamily.

The protein resides in the cytoplasm. Functionally, increases the formation of ribosomal termination complexes and stimulates activities of RF-1 and RF-2. It binds guanine nucleotides and has strong preference for UGA stop codons. It may interact directly with the ribosome. The stimulation of RF-1 and RF-2 is significantly reduced by GTP and GDP, but not by GMP. This is Peptide chain release factor 3 from Staphylococcus carnosus (strain TM300).